Consider the following 928-residue polypeptide: Probable outer membrane protein pmp11 (928 aa).

The signal sequence occupies residues 1 to 24 (MKTSIPWVLVSSVLAFSCHLQSLA). Residues 627–928 (GMEHKQGFWV…NVDVGTKLRF (302 aa)) enclose the Autotransporter domain.

It belongs to the PMP outer membrane protein family.

It localises to the secreted. The protein resides in the cell wall. It is found in the cell outer membrane. The protein is Probable outer membrane protein pmp11 (pmp11) of Chlamydia pneumoniae (Chlamydophila pneumoniae).